The sequence spans 329 residues: MDNNMEIDAARSPEPHHLSPTTDPGSIPTLDGWIESLMTCKQLAEEDVRRLCDRAREVLQEESNVQPVKCPVTVCGDIHGQFHDLMELFRIGGPNPDTNYLFMGDYVDRGYYSVETVTLLVCLKIRYPQRITILRGNHESRQITQVYGFYDECLRKYGNANVWKYFTDLFDYLPLTALIENQIFCLHGGLSPSIDTLDNIRSLDRIQEVPHEGPMCDLLWSDPDDRCGWGISPRGAGYTFGQDISEAFNHNNGLTLVARAHQLVMEGYNWSQDRNVVTIFSAPNYCYRCGNQAAIMEIDEHLKYTFLQFDPCPRAGEPMVSRRTPDYFL.

The tract at residues M1–G25 is disordered. Basic and acidic residues predominate over residues D8–H17. Mn(2+)-binding residues include D77, H79, D105, and N137. The active-site Proton donor is the H138. The Mn(2+) site is built by H187 and H261. L329 is modified (leucine methyl ester).

The protein belongs to the PPP phosphatase family. PP-2A subfamily. Requires Mn(2+) as cofactor.

The enzyme catalyses O-phospho-L-seryl-[protein] + H2O = L-seryl-[protein] + phosphate. The catalysed reaction is O-phospho-L-threonyl-[protein] + H2O = L-threonyl-[protein] + phosphate. Involved in hyphal morphogenesis. This Emericella nidulans (strain FGSC A4 / ATCC 38163 / CBS 112.46 / NRRL 194 / M139) (Aspergillus nidulans) protein is Serine/threonine-protein phosphatase PP2A catalytic subunit (pphA).